Consider the following 68-residue polypeptide: Large ribosomal subunit protein bL31 (68 aa).

Zn(2+)-binding residues include Cys17, Cys19, Cys37, and Cys40.

It belongs to the bacterial ribosomal protein bL31 family. Type A subfamily. As to quaternary structure, part of the 50S ribosomal subunit. Zn(2+) serves as cofactor.

Functionally, binds the 23S rRNA. This chain is Large ribosomal subunit protein bL31, found in Clostridium perfringens (strain ATCC 13124 / DSM 756 / JCM 1290 / NCIMB 6125 / NCTC 8237 / Type A).